The primary structure comprises 177 residues: Peptide methionine sulfoxide reductase MsrA (177 aa).

Cysteine 15 is an active-site residue.

It belongs to the MsrA Met sulfoxide reductase family.

It catalyses the reaction L-methionyl-[protein] + [thioredoxin]-disulfide + H2O = L-methionyl-(S)-S-oxide-[protein] + [thioredoxin]-dithiol. The enzyme catalyses [thioredoxin]-disulfide + L-methionine + H2O = L-methionine (S)-S-oxide + [thioredoxin]-dithiol. Functionally, has an important function as a repair enzyme for proteins that have been inactivated by oxidation. Catalyzes the reversible oxidation-reduction of methionine sulfoxide in proteins to methionine. The protein is Peptide methionine sulfoxide reductase MsrA of Listeria welshimeri serovar 6b (strain ATCC 35897 / DSM 20650 / CCUG 15529 / CIP 8149 / NCTC 11857 / SLCC 5334 / V8).